A 136-amino-acid chain; its full sequence is Histone H3 (136 aa).

Residues 1–42 (MARTKQTARKSTGGKAPRKQLATKAAAKSAPATGGVKKPHRY) form a disordered region. Lys-5 carries the post-translational modification N6-methylated lysine. Residue Lys-10 is modified to N6-acetyllysine; alternate. The residue at position 10 (Lys-10) is an N6-methylated lysine; alternate. Position 11 is a phosphoserine (Ser-11). 2 positions are modified to N6-acetyllysine: Lys-15 and Lys-24. The segment covering 22–33 (ATKAAAKSAPAT) has biased composition (low complexity). 3 positions are modified to N6-methylated lysine: Lys-28, Lys-37, and Lys-80.

This sequence belongs to the histone H3 family. The nucleosome is a histone octamer containing two molecules each of H2A, H2B, H3 and H4 assembled in one H3-H4 heterotetramer and two H2A-H2B heterodimers. The octamer wraps approximately 147 bp of DNA. In terms of processing, acetylation is generally linked to gene activation. Methylation at Lys-5 is linked to gene activation. Methylation at Lys-10 is linked to gene repression.

The protein resides in the nucleus. Its subcellular location is the chromosome. Core component of nucleosome. Nucleosomes wrap and compact DNA into chromatin, limiting DNA accessibility to the cellular machineries which require DNA as a template. Histones thereby play a central role in transcription regulation, DNA repair, DNA replication and chromosomal stability. DNA accessibility is regulated via a complex set of post-translational modifications of histones, also called histone code, and nucleosome remodeling. In Acropora formosa (Staghorn coral), this protein is Histone H3.